The following is a 1015-amino-acid chain: Condensin complex subunit 3 (1015 aa).

5 HEAT repeats span residues 94 to 131 (GLLN…SMPE), 138 to 173 (DVFD…QDPK), 174 to 212 (DDEC…TLPK), 238 to 275 (MRAM…GWLR), and 276 to 313 (FSEG…LSEL). The residue at position 390 (Ser-390) is a Phosphoserine. 3 HEAT repeats span residues 399 to 436 (EFIG…LPTI), 439 to 478 (SLVS…TVGV), and 617 to 654 (DFAR…TFGI). A Phosphoserine modification is found at Ser-674. 2 HEAT repeats span residues 687–724 (ATAK…SGLL) and 865–907 (KDLL…QAEA). At Thr-931 the chain carries Phosphothreonine. Over residues 941–950 (ASKSTQLKTN) the composition is skewed to polar residues. The disordered stretch occupies residues 941 to 994 (ASKSTQLKTNRGQRKVTVSARTNRRCQTAEADSESDHEVPEPESEMKMRLPRRA). Residues Ser-973, Ser-975, Ser-1002, and Ser-1015 each carry the phosphoserine modification. A compositionally biased stretch (basic and acidic residues) spans 974 to 988 (ESDHEVPEPESEMKM).

This sequence belongs to the CND3 (condensin subunit 3) family. Component of the condensin complex, which contains the SMC2 and SMC4 heterodimer, and three non SMC subunits that probably regulate the complex: NCAPH/BRRN1, NCAPD2/CAPD2 and NCAPG. Phosphorylated by CDK1. Its phosphorylation, as well as that of NCAPD2 and NCAPH subunits, activates the condensin complex and is required for chromosome condensation. In terms of tissue distribution, highly expressed in testis.

It localises to the nucleus. It is found in the cytoplasm. The protein resides in the chromosome. Regulatory subunit of the condensin complex, a complex required for conversion of interphase chromatin into mitotic-like condense chromosomes. The condensin complex probably introduces positive supercoils into relaxed DNA in the presence of type I topoisomerases and converts nicked DNA into positive knotted forms in the presence of type II topoisomerases. This Homo sapiens (Human) protein is Condensin complex subunit 3 (NCAPG).